A 177-amino-acid chain; its full sequence is Adenine phosphoribosyltransferase (177 aa).

It belongs to the purine/pyrimidine phosphoribosyltransferase family. In terms of assembly, homodimer.

The protein resides in the cytoplasm. The enzyme catalyses AMP + diphosphate = 5-phospho-alpha-D-ribose 1-diphosphate + adenine. Its pathway is purine metabolism; AMP biosynthesis via salvage pathway; AMP from adenine: step 1/1. In terms of biological role, catalyzes a salvage reaction resulting in the formation of AMP, that is energically less costly than de novo synthesis. This chain is Adenine phosphoribosyltransferase, found in Chlorobium limicola (strain DSM 245 / NBRC 103803 / 6330).